The sequence spans 328 residues: AA9 family lytic polysaccharide monooxygenase A (328 aa).

A signal peptide spans 1–21 (MPSTKVAALSAVLALASTVAG). His-22 contributes to the Cu(2+) binding site. His-22 carries the post-translational modification Methylhistidine. Intrachain disulfides connect Cys-77-Cys-199 and Cys-118-Cys-122. An N-linked (GlcNAc...) asparagine glycan is attached at Asn-80. His-107 is a binding site for Cu(2+). Residues Asn-121 and Asn-159 are each glycosylated (N-linked (GlcNAc...) asparagine). Residues His-185 and Gln-194 each contribute to the O2 site. Residue Tyr-196 coordinates Cu(2+). O-linked (Man...) serine glycosylation is found at Ser-235 and Ser-237. O-linked (Man...) threonine glycosylation is found at Thr-238 and Thr-245.

It belongs to the polysaccharide monooxygenase AA9 family. Requires Cu(2+) as cofactor. The catalytically essential N-terminal histidine His-22 is post-translationally modified by methylation to prevent protonation of the histidine side chain, and protect the critical active site of the enzyme from oxidative damage.

The protein resides in the secreted. The enzyme catalyses [(1-&gt;4)-beta-D-glucosyl]n+m + reduced acceptor + O2 = 4-dehydro-beta-D-glucosyl-[(1-&gt;4)-beta-D-glucosyl]n-1 + [(1-&gt;4)-beta-D-glucosyl]m + acceptor + H2O.. Functionally, lytic polysaccharide monooxygenase (LPMO) that depolymerizes crystalline and amorphous polysaccharides via the oxidation of scissile alpha- or beta-(1-4)-glycosidic bonds, yielding C1 and C4 oxidation products. Catalysis by LPMOs requires the reduction of the active-site copper from Cu(II) to Cu(I) by a reducing agent and H(2)O(2) or O(2) as a cosubstrate. Shows activity on cellulosic substrates (Avicel, carboxymethylcellulose) and xylan. In Talaromyces verruculosus (Penicillium verruculosum), this protein is AA9 family lytic polysaccharide monooxygenase A.